A 212-amino-acid polypeptide reads, in one-letter code: Imidazole glycerol phosphate synthase subunit HisH (212 aa).

The Glutamine amidotransferase type-1 domain maps to 3–211 (LIAVIDYDMG…VQQVQKLALV (209 aa)). Cysteine 81 (nucleophile) is an active-site residue. Active-site residues include histidine 186 and glutamate 188.

Heterodimer of HisH and HisF.

It localises to the cytoplasm. It carries out the reaction 5-[(5-phospho-1-deoxy-D-ribulos-1-ylimino)methylamino]-1-(5-phospho-beta-D-ribosyl)imidazole-4-carboxamide + L-glutamine = D-erythro-1-(imidazol-4-yl)glycerol 3-phosphate + 5-amino-1-(5-phospho-beta-D-ribosyl)imidazole-4-carboxamide + L-glutamate + H(+). It catalyses the reaction L-glutamine + H2O = L-glutamate + NH4(+). It participates in amino-acid biosynthesis; L-histidine biosynthesis; L-histidine from 5-phospho-alpha-D-ribose 1-diphosphate: step 5/9. Functionally, IGPS catalyzes the conversion of PRFAR and glutamine to IGP, AICAR and glutamate. The HisH subunit catalyzes the hydrolysis of glutamine to glutamate and ammonia as part of the synthesis of IGP and AICAR. The resulting ammonia molecule is channeled to the active site of HisF. In Microcystis aeruginosa (strain NIES-843 / IAM M-2473), this protein is Imidazole glycerol phosphate synthase subunit HisH.